A 285-amino-acid chain; its full sequence is Steroidogenic acute regulatory protein, mitochondrial (285 aa).

The transit peptide at M1–I61 directs the protein to the mitochondrion. An START domain is found at T65–G278.

May interact with TSPO. In terms of tissue distribution, highly expressed in the testis and at lower levels in the ovary, kidney and head.

The protein resides in the mitochondrion. The catalysed reaction is cholesterol(in) = cholesterol(out). Its pathway is steroid metabolism; cholesterol metabolism. Its function is as follows. Plays a key role in steroid hormone synthesis by enhancing the metabolism of cholesterol into pregnenolone. Mediates the transfer of cholesterol from the outer mitochondrial membrane to the inner mitochondrial membrane where it is cleaved to pregnenolone. The protein is Steroidogenic acute regulatory protein, mitochondrial (star) of Danio rerio (Zebrafish).